We begin with the raw amino-acid sequence, 53 residues long: Ovomucoid (53 aa).

One can recognise a Kazal-like domain in the interval 3–53; sequence VDCSEYPQPTCTTEHRPVCGSNNETYGNKCNFCNAVVKSNGTLTVSHFGKC. 3 disulfides stabilise this stretch: cysteine 5-cysteine 35, cysteine 13-cysteine 32, and cysteine 21-cysteine 53. Asparagine 42 carries an N-linked (GlcNAc...) asparagine glycan.

It localises to the secreted. The protein is Ovomucoid of Polyplectron bicalcaratum (Grey peacock-pheasant).